The primary structure comprises 301 residues: Possible hemolysin C (301 aa).

2 consecutive CBS domains span residues 80–142 (MVPR…NGRL) and 145–202 (LIRK…IDDE).

It belongs to the UPF0053 family. Hemolysin C subfamily.

This chain is Possible hemolysin C (tlyC), found in Rickettsia akari (strain Hartford).